Reading from the N-terminus, the 331-residue chain is Ketol-acid reductoisomerase (NADP(+)) (331 aa).

The KARI N-terminal Rossmann domain occupies 2–182 (AQLFYDTDAD…GGTRAGILET (181 aa)). Residues 25-28 (YGSQ), Ser51, Ser53, and 83-86 (DEFQ) contribute to the NADP(+) site. The active site involves His108. NADP(+) is bound at residue Gly134. A KARI C-terminal knotted domain is found at 183–328 (NFKEETETDL…KGLRSMFSWL (146 aa)). Residues Asp191, Glu195, Glu227, and Glu231 each contribute to the Mg(2+) site. Residue Ser252 participates in substrate binding.

This sequence belongs to the ketol-acid reductoisomerase family. Mg(2+) is required as a cofactor.

The catalysed reaction is (2R)-2,3-dihydroxy-3-methylbutanoate + NADP(+) = (2S)-2-acetolactate + NADPH + H(+). The enzyme catalyses (2R,3R)-2,3-dihydroxy-3-methylpentanoate + NADP(+) = (S)-2-ethyl-2-hydroxy-3-oxobutanoate + NADPH + H(+). The protein operates within amino-acid biosynthesis; L-isoleucine biosynthesis; L-isoleucine from 2-oxobutanoate: step 2/4. It participates in amino-acid biosynthesis; L-valine biosynthesis; L-valine from pyruvate: step 2/4. Its function is as follows. Involved in the biosynthesis of branched-chain amino acids (BCAA). Catalyzes an alkyl-migration followed by a ketol-acid reduction of (S)-2-acetolactate (S2AL) to yield (R)-2,3-dihydroxy-isovalerate. In the isomerase reaction, S2AL is rearranged via a Mg-dependent methyl migration to produce 3-hydroxy-3-methyl-2-ketobutyrate (HMKB). In the reductase reaction, this 2-ketoacid undergoes a metal-dependent reduction by NADPH to yield (R)-2,3-dihydroxy-isovalerate. This chain is Ketol-acid reductoisomerase (NADP(+)), found in Synechococcus sp. (strain WH7803).